The primary structure comprises 252 residues: Type III pantothenate kinase (252 aa).

Residue 6 to 13 participates in ATP binding; sequence DIGNTSTA. 104–107 provides a ligand contact to substrate; that stretch reads GADR. The active-site Proton acceptor is Asp-106. Residue Asp-128 participates in K(+) binding. Thr-131 serves as a coordination point for ATP. Thr-183 is a substrate binding site.

This sequence belongs to the type III pantothenate kinase family. As to quaternary structure, homodimer. It depends on NH4(+) as a cofactor. Requires K(+) as cofactor.

Its subcellular location is the cytoplasm. The catalysed reaction is (R)-pantothenate + ATP = (R)-4'-phosphopantothenate + ADP + H(+). It functions in the pathway cofactor biosynthesis; coenzyme A biosynthesis; CoA from (R)-pantothenate: step 1/5. Its function is as follows. Catalyzes the phosphorylation of pantothenate (Pan), the first step in CoA biosynthesis. The chain is Type III pantothenate kinase from Thermus thermophilus (strain ATCC BAA-163 / DSM 7039 / HB27).